The primary structure comprises 658 residues: Methionine--tRNA ligase (658 aa).

Residues P9–H19 carry the 'HIGH' region motif. Positions 140, 143, 152, and 156 each coordinate Zn(2+). Positions T322 to S326 match the 'KMSKS' region motif. K325 contributes to the ATP binding site. A tRNA-binding domain is found at D558–C658.

This sequence belongs to the class-I aminoacyl-tRNA synthetase family. MetG type 1 subfamily. Homodimer. Requires Zn(2+) as cofactor.

The protein localises to the cytoplasm. The enzyme catalyses tRNA(Met) + L-methionine + ATP = L-methionyl-tRNA(Met) + AMP + diphosphate. Functionally, is required not only for elongation of protein synthesis but also for the initiation of all mRNA translation through initiator tRNA(fMet) aminoacylation. The chain is Methionine--tRNA ligase from Archaeoglobus fulgidus (strain ATCC 49558 / DSM 4304 / JCM 9628 / NBRC 100126 / VC-16).